A 253-amino-acid polypeptide reads, in one-letter code: MAGHSKWANIKRQKARVDAKKGKVFARLSRAIIVAARHGSADPNGNFQLRSAIDKAKAAGIPNENIDRAIAKGSGQLDAEGDQWEEIRYEGYGIGGVALLIEAMTDNRNRTAADLRAAFNKYGGNLGETGCVGWMFHQQGIISILGPVDEDQLLESLVETGADSYEFVEENAQAIAEVSTDVTVLETVTEALKAQDFQILDAEIRWIGEMSVAIADPDQAKSLIRLMDALEDLDDVQSVTANVEFMDNALAGL.

This sequence belongs to the TACO1 family.

It is found in the cytoplasm. The chain is Probable transcriptional regulatory protein AM1_1847 from Acaryochloris marina (strain MBIC 11017).